Reading from the N-terminus, the 530-residue chain is MPQKWISALLLLQISFCFRSGNCGKVLVWPLEYSHWMNLKIILDELVQRGHEVTVLRPSSSVSLDPKKASGLVYETSPTTSNNDEVEKSFYPVGDMWTYDVPKYTCLRYYPSLNKMFGQFSDLWLQLCREVVSNKELIAKLKESQFDVVLSDAVGPCGELIAEILQLPFVYSLRFATAPGIEKYSAGQPFPPSYVPIILSGFSGQMTFMERVENMLCLLYFDSWFESFPAKDWDPFFSEILGRPTTMVDTMKKAEIWLIRSYWDLEFPRPSLPNIEFVGGLHCQPAKPLPKEMEDFAQSSGEHGVWVFSLGSMIRNITQERANTIASALAQIPQKVFWRFEGKKPDTLGPNTRVFKWIPQNDLLGHPKTKAFVTHGGANGIYESIHYGIPPMVGIPLFAEQRDNVAHMVAKGAAVSIDFHTMSSSDLLNALKAVINNPSYKKKVMWLSAIHHDQPLKPLDRAVFWIEFVMRHKGAKHLRPLAHNLALVSVHSLDVIGFLLACVLAIVLLAVKCCLFLYRFFVKVAKNKRD.

An N-terminal signal peptide occupies residues 1-17 (MPQKWISALLLLQISFC). N-linked (GlcNAc...) asparagine glycosylation is present at asparagine 316. UDP-alpha-D-glucuronate-binding positions include 374–380 (THGGANG) and glutamate 400. The chain crosses the membrane as a helical span at residues 496–516 (IGFLLACVLAIVLLAVKCCLF).

The protein belongs to the UDP-glycosyltransferase family.

It is found in the endoplasmic reticulum membrane. The catalysed reaction is glucuronate acceptor + UDP-alpha-D-glucuronate = acceptor beta-D-glucuronoside + UDP + H(+). The enzyme catalyses 17alpha-estradiol + UDP-alpha-D-glucuronate = 17alpha-estradiol 17-O-(beta-D-glucuronate) + UDP + H(+). It carries out the reaction 17beta-estradiol + UDP-alpha-D-glucuronate = 17beta-estradiol 17-O-(beta-D-glucuronate) + UDP + H(+). It catalyses the reaction 2-hydroxy-17beta-estradiol + UDP-alpha-D-glucuronate = 2-hydroxy-17beta-estradiol 3-O-(beta-D-glucuronate) + UDP + H(+). The catalysed reaction is 4-hydroxy-17beta-estradiol + UDP-alpha-D-glucuronate = 17beta-estradiol 4-O-(beta-D-glucuronate) + UDP + H(+). The enzyme catalyses 4-hydroxyestrone + UDP-alpha-D-glucuronate = estrone 4-O-(beta-D-glucuronate) + UDP + H(+). It carries out the reaction 16alpha-hydroxyestrone + UDP-alpha-D-glucuronate = 16alpha-hydroxyestrone 16-O-(beta-D-glucuronate) + UDP + H(+). It catalyses the reaction 16alpha,17beta-estriol + UDP-alpha-D-glucuronate = 16alpha,17beta-estriol 16-O-(beta-D-glucuronate) + UDP + H(+). The catalysed reaction is 16beta,17beta-estriol + UDP-alpha-D-glucuronate = 16beta,17beta-estriol 16-O-(beta-D-glucuronate) + UDP + H(+). The enzyme catalyses 16alpha,17alpha-estriol + UDP-alpha-D-glucuronate = 16alpha,17alpha-estriol 16-O-(beta-D-glucuronate) + UDP + H(+). It carries out the reaction 16alpha,17alpha-estriol + UDP-alpha-D-glucuronate = 16alpha,17alpha-estriol 17-O-(beta-D-glucuronate) + UDP + H(+). It catalyses the reaction epitestosterone + UDP-alpha-D-glucuronate = epitestosterone 17-O-(beta-D-glucuronate) + UDP + H(+). The catalysed reaction is hyodeoxycholate + UDP-alpha-D-glucuronate = hyodeoxycholate 6-O-(beta-D-glucuronate) + UDP + H(+). The enzyme catalyses hyocholate + UDP-alpha-D-glucuronate = hyocholate 6-O-(beta-D-glucuronate) + UDP + H(+). It carries out the reaction all-trans-retinoate + UDP-alpha-D-glucuronate = all-trans-retinoyl-1-O-(beta-D-glucuronate) + UDP. It catalyses the reaction all-trans-4-hydroxyretinoate + UDP-alpha-D-glucuronate = all-trans-4-hydroxy-4-O-(beta-D-glucuronide)-retinoate + UDP + H(+). The catalysed reaction is (E)-ferulate + UDP-alpha-D-glucuronate = (E)-ferulic acid beta-D-glucuronate ester + UDP. The enzyme catalyses 8-iso-prostaglandin F2alpha + UDP-alpha-D-glucuronate = 8-iso-prostaglandin F2alpha-glucuronide + UDP + H(+). It carries out the reaction 5-epi-5-F2t-IsoP + UDP-alpha-D-glucuronate = 5-epi-5-F2t-IsoP-glucuronide + UDP + H(+). It catalyses the reaction (5Z,8Z,11Z,14Z)-eicosatetraenoate + UDP-alpha-D-glucuronate = O-[(5Z),(8Z),(11Z),(14Z)-eicosatetraenoyl]-beta-D-glucuronate + UDP. The catalysed reaction is 15-hydroxy-(5Z,8Z,11Z,13E)-eicosatetraenoate + UDP-alpha-D-glucuronate = 15-O-(beta-D-glucuronosyl)-(5Z,8Z,11Z,14Z)-eicosatetraenoate + UDP + H(+). The enzyme catalyses 20-hydroxy-(5Z,8Z,11Z,14Z)-eicosatetraenoate + UDP-alpha-D-glucuronate = 20-O-(beta-D-glucuronosyl)-(5Z,8Z,11Z,14Z)-eicosatetraenoate + UDP + H(+). It carries out the reaction (E)-ferulate + UDP-alpha-D-glucuronate = (E)-4-O-(beta-D-glucuronosyl)-ferulate + UDP + H(+). It catalyses the reaction prostaglandin B1 + UDP-alpha-D-glucuronate = 15-O-(beta-D-glucuronosyl)-prostaglandin B1 + UDP + H(+). The catalysed reaction is mycophenolate + UDP-alpha-D-glucuronate = mycophenolic acid O-acyl-beta-D-glucuronide + UDP. The enzyme catalyses losartan + UDP-alpha-D-glucuronate = losartan-2-N-beta-D-glucuronide + UDP. It carries out the reaction candesartan + UDP-alpha-D-glucuronate = candesartan O-beta-D-glucuronoside + UDP. It catalyses the reaction candesartan + UDP-alpha-D-glucuronate = candesartan-2-N-beta-D-glucuronide + UDP. The catalysed reaction is zolasartan + UDP-alpha-D-glucuronate = zolarsartan O-beta-D-glucuronoside + UDP. In terms of biological role, UDP-glucuronosyltransferase (UGT) that catalyzes phase II biotransformation reactions in which lipophilic substrates are conjugated with glucuronic acid to increase the metabolite's water solubility, thereby facilitating excretion into either the urine or bile. Essential for the elimination and detoxification of drugs, xenobiotics and endogenous compounds. Catalyzes the glucuronidation of endogenous steroid hormones such as androgens (epitestosterone, androsterone) and estrogens (estradiol, epiestradiol, estriol, catechol estrogens). Also regulates the levels of retinoic acid, a major metabolite of vitamin A involved in apoptosis, cellular growth and differentiation, and embryonic development. Contributes to bile acid (BA) detoxification by catalyzing the glucuronidation of BA substrates, which are natural detergents for dietary lipids absorption. Involved in the glucuronidation of arachidonic acid (AA) and AA-derived eicosanoids including 15-HETE, 20-HETE, PGE2, PGB1 and F2-isoprostanes (8-iso-PGF2alpha and 5-epi-5-F2t-IsoP). Involved in the glucuronidation of the phytochemical ferulic acid at the phenolic or the carboxylic acid group. Involved in the glucuronidation of the AGTR1 angiotensin receptor antagonist losartan, caderastan and zolarsatan, drugs which can inhibit the effect of angiotensin II. Also metabolizes mycophenolate, an immunosuppressive agent. This chain is UDP-glucuronosyltransferase 2B7, found in Rattus norvegicus (Rat).